A 90-amino-acid polypeptide reads, in one-letter code: DNA-directed RNA polymerase subunit omega (90 aa).

It belongs to the RNA polymerase subunit omega family. In terms of assembly, the RNAP catalytic core consists of 2 alpha, 1 beta, 1 beta' and 1 omega subunit. When a sigma factor is associated with the core the holoenzyme is formed, which can initiate transcription.

It carries out the reaction RNA(n) + a ribonucleoside 5'-triphosphate = RNA(n+1) + diphosphate. In terms of biological role, promotes RNA polymerase assembly. Latches the N- and C-terminal regions of the beta' subunit thereby facilitating its interaction with the beta and alpha subunits. The sequence is that of DNA-directed RNA polymerase subunit omega from Beutenbergia cavernae (strain ATCC BAA-8 / DSM 12333 / CCUG 43141 / JCM 11478 / NBRC 16432 / NCIMB 13614 / HKI 0122).